A 599-amino-acid chain; its full sequence is Matrix metallopeptidase-21 (599 aa).

An N-terminal signal peptide occupies residues 1 to 20; the sequence is MLTVIRRIFIIQTFIFITAE. A propeptide spanning residues 21–170 is cleaved from the precursor; it reads KIFHSRDHSD…NHEHQAPVRK (150 aa). Cys130 is a binding site for Zn(2+). Residues 141 to 170 form a disordered region; that stretch reads DVTGSNSTRNHIRTSTNTSHNHEHQAPVRK. Over residues 143–159 the composition is skewed to polar residues; that stretch reads TGSNSTRNHIRTSTNTS. Residue His309 coordinates Zn(2+). Glu310 is a catalytic residue. 2 residues coordinate Zn(2+): His313 and His319. Cys355 and Cys586 are joined by a disulfide. Hemopexin repeat units follow at residues 356 to 415, 417 to 473, 474 to 522, and 529 to 585; these read TGRF…WHGL, SGGV…FPGV, SGPL…FPAI, and VRSL…WFDI. Asn398 carries N-linked (GlcNAc...) asparagine glycosylation.

Belongs to the peptidase M10A family. In terms of processing, the precursor is cleaved by a furin endopeptidase.

Plays a specialized role in the generation of left-right asymmetry during embryogenesis. May act as a negative regulator of the NOTCH-signaling pathway. This chain is Matrix metallopeptidase-21, found in Danio rerio (Zebrafish).